Here is a 979-residue protein sequence, read N- to C-terminus: Calsyntenin-1 (979 aa).

An N-terminal signal peptide occupies residues 1–28; sequence MLRRPAPALAPAVRLLLAGLLCGGGVWA. Residues 29 to 859 lie on the Extracellular side of the membrane; sequence ARVNKHKPWL…PHPFAVVPST (831 aa). Cadherin domains lie at 38 to 164 and 165 to 265; these read LEPT…APVF and KEKS…SPGW. Residues Asn-346, Asn-366, and Asn-515 are each glycosylated (N-linked (GlcNAc...) asparagine). The helical transmembrane segment at 860–880 threads the bilayer; it reads ATVVIVVCVSFLVFMIILGVF. The Cytoplasmic portion of the chain corresponds to 881-979; that stretch reads RIRAAHQRTM…LEWDDSTLSY (99 aa). Residues 915-979 are disordered; that stretch reads METYEDQHSS…LEWDDSTLSY (65 aa). Residues 925–959 show a composition bias toward acidic residues; sequence EEEEEEEEEEESEDGEEEEDITSAESESSEEEEGG.

It belongs to the calsyntenin family. As to quaternary structure, directly interacts with APBA2. Forms a tripartite complex with APBA2 and APP. The CTF1 chain interacts with PSEN1. Interacts with KLC1 and APBB1. In terms of assembly, interacts with APBB1; this interaction stabilizes AlcICD metabolism. Interacts with PSEN1. In terms of processing, proteolytically processed under normal cellular conditions. A primary zeta-cleavage generates a large extracellular (soluble) N-terminal domain (sAlc) and a short C-terminal transmembrane fragment (CTF1). A secondary cleavage catalyzed by presenilin gamma-secretase within the transmembrane domain releases the beta-Alc-alpha chain in the extracellular milieu and produces an intracellular fragment (AlcICD). Beta-Alc-alpha secretion is largely dependent upon PSEN1 and PSEN2. This processing is strongly suppressed in the tripartite complex formed with APBA2 and APP, which seems to prevent the association with PSEN1. Highly expressed in the brain (at protein level), with over 90% of the neurons expressing detectable amounts. In the brain, relatively high levels in the cerebral cortex, striatum, hippocampus and thalamus. Moderate levels in the cerebellum. Low levels in the olfactory bulb, midbrain and pons (at protein level). Not detected in Purkinje cells. Expressed at low levels in the lung (at protein level). At the mRNA level, weakly detected in the kidney, lung, skeletal muscle, heart and testis. Not expressed in the sciatic nerve fiber.

The protein localises to the postsynaptic cell membrane. It localises to the endoplasmic reticulum membrane. It is found in the golgi apparatus membrane. Its subcellular location is the cell projection. The protein resides in the neuron projection. The protein localises to the vesicle. It localises to the nucleus. Functionally, postsynaptic adhesion molecule that binds to presynaptic neurexins to mediate both excitatory and inhibitory synapse formation. Promotes synapse development by acting as a cell adhesion molecule at the postsynaptic membrane, which associates with neurexin-alpha at the presynaptic membrane. Also functions as a cargo in axonal anterograde transport by acting as a molecular adapter that promotes KLC1 association with vesicles. Complex formation with APBA2 and APP, stabilizes APP metabolism and enhances APBA2-mediated suppression of beta-APP40 secretion, due to the retardation of intracellular APP maturation. As intracellular fragment AlcICD, suppresses APBB1-dependent transactivation stimulated by APP C-terminal intracellular fragment (AICD), most probably by competing with AICD for APBB1-binding. Its function is as follows. In complex with APBA2 and C99, a C-terminal APP fragment, abolishes C99 interaction with PSEN1 and thus APP C99 cleavage by gamma-secretase, most probably through stabilization of the direct interaction between APBA2 and APP. This chain is Calsyntenin-1, found in Mus musculus (Mouse).